Here is a 371-residue protein sequence, read N- to C-terminus: UDP-N-acetylglucosamine--N-acetylmuramyl-(pentapeptide) pyrophosphoryl-undecaprenol N-acetylglucosamine transferase (371 aa).

UDP-N-acetyl-alpha-D-glucosamine contacts are provided by residues 15–17 (TGG), Asn-126, Arg-172, Ser-199, Ile-256, 275–280 (ALTVSE), and Gln-301.

The protein belongs to the glycosyltransferase 28 family. MurG subfamily.

It localises to the cell inner membrane. The enzyme catalyses di-trans,octa-cis-undecaprenyl diphospho-N-acetyl-alpha-D-muramoyl-L-alanyl-D-glutamyl-meso-2,6-diaminopimeloyl-D-alanyl-D-alanine + UDP-N-acetyl-alpha-D-glucosamine = di-trans,octa-cis-undecaprenyl diphospho-[N-acetyl-alpha-D-glucosaminyl-(1-&gt;4)]-N-acetyl-alpha-D-muramoyl-L-alanyl-D-glutamyl-meso-2,6-diaminopimeloyl-D-alanyl-D-alanine + UDP + H(+). It participates in cell wall biogenesis; peptidoglycan biosynthesis. In terms of biological role, cell wall formation. Catalyzes the transfer of a GlcNAc subunit on undecaprenyl-pyrophosphoryl-MurNAc-pentapeptide (lipid intermediate I) to form undecaprenyl-pyrophosphoryl-MurNAc-(pentapeptide)GlcNAc (lipid intermediate II). This chain is UDP-N-acetylglucosamine--N-acetylmuramyl-(pentapeptide) pyrophosphoryl-undecaprenol N-acetylglucosamine transferase, found in Francisella tularensis subsp. tularensis (strain WY96-3418).